We begin with the raw amino-acid sequence, 511 residues long: Serine hydroxymethyltransferase (511 aa).

Lys-287 carries the N6-(pyridoxal phosphate)lysine modification.

Belongs to the SHMT family. Homotetramer. It depends on pyridoxal 5'-phosphate as a cofactor.

The catalysed reaction is (6R)-5,10-methylene-5,6,7,8-tetrahydrofolate + glycine + H2O = (6S)-5,6,7,8-tetrahydrofolate + L-serine. It functions in the pathway one-carbon metabolism; tetrahydrofolate interconversion. Its function is as follows. Interconversion of serine and glycine. In Caenorhabditis briggsae, this protein is Serine hydroxymethyltransferase.